A 514-amino-acid polypeptide reads, in one-letter code: Polygalacturonase (514 aa).

An N-terminal signal peptide occupies residues 1–22 (MGMKFMAAVAFLALQLIVMAAA). Residues 23 to 50 (EDQSAQIMLDSDIEQYLRSNRSLKKLVH) constitute a propeptide that is removed on maturation. PbH1 repeat units follow at residues 214–240 (CEGV…DIFA), 241–262 (SKRF…AIGT), 264–284 (SSNI…SIGS), 294–315 (VSHV…RIKT), 323–344 (ASYI…LINQ), and 357–384 (RSAV…QLMC). The active-site Proton donor is Asp255. Asn266 is a glycosylation site (N-linked (GlcNAc...) asparagine). His278 is an active-site residue. Asn397 is a glycosylation site (N-linked (GlcNAc...) asparagine).

Belongs to the glycosyl hydrolase 28 family.

Its subcellular location is the secreted. It is found in the cell wall. It catalyses the reaction (1,4-alpha-D-galacturonosyl)n+m + H2O = (1,4-alpha-D-galacturonosyl)n + (1,4-alpha-D-galacturonosyl)m.. This chain is Polygalacturonase, found in Chamaecyparis obtusa (Hinoki false-cypress).